Here is a 128-residue protein sequence, read N- to C-terminus: MANSLAIIADPKTGKTYKREIPSERMSSLIGRKIGEEVDGVFFDLVGYKMKITGGSSVDGFAMRPDLQTQGKKQILVKYTSGYRGKNGIRKRITARGSIIGSDITQINLKITQYGPTPIEEKKDDQQA.

This sequence belongs to the eukaryotic ribosomal protein eS6 family.

The sequence is that of Small ribosomal subunit protein eS6 from Thermoplasma volcanium (strain ATCC 51530 / DSM 4299 / JCM 9571 / NBRC 15438 / GSS1).